The chain runs to 342 residues: Holliday junction branch migration complex subunit RuvB (342 aa).

Positions 1-179 (MTNILSPEKI…FGIPMRLNFY (179 aa)) are large ATPase domain (RuvB-L). ATP-binding positions include Ile18, Arg19, Gly60, Lys63, Thr64, Thr65, 126 to 128 (EDF), Arg169, Tyr179, and Arg216. Residue Thr64 participates in Mg(2+) binding. The small ATPAse domain (RuvB-S) stretch occupies residues 180-250 (NTEELKKVLN…ISDFGLNRLE (71 aa)). A head domain (RuvB-H) region spans residues 253–342 (HIGLDSNDYR…HQFNIFNENE (90 aa)). DNA is bound by residues Arg289, Arg308, and Arg313.

It belongs to the RuvB family. As to quaternary structure, homohexamer. Forms an RuvA(8)-RuvB(12)-Holliday junction (HJ) complex. HJ DNA is sandwiched between 2 RuvA tetramers; dsDNA enters through RuvA and exits via RuvB. An RuvB hexamer assembles on each DNA strand where it exits the tetramer. Each RuvB hexamer is contacted by two RuvA subunits (via domain III) on 2 adjacent RuvB subunits; this complex drives branch migration. In the full resolvosome a probable DNA-RuvA(4)-RuvB(12)-RuvC(2) complex forms which resolves the HJ.

It is found in the cytoplasm. The enzyme catalyses ATP + H2O = ADP + phosphate + H(+). Functionally, the RuvA-RuvB-RuvC complex processes Holliday junction (HJ) DNA during genetic recombination and DNA repair, while the RuvA-RuvB complex plays an important role in the rescue of blocked DNA replication forks via replication fork reversal (RFR). RuvA specifically binds to HJ cruciform DNA, conferring on it an open structure. The RuvB hexamer acts as an ATP-dependent pump, pulling dsDNA into and through the RuvAB complex. RuvB forms 2 homohexamers on either side of HJ DNA bound by 1 or 2 RuvA tetramers; 4 subunits per hexamer contact DNA at a time. Coordinated motions by a converter formed by DNA-disengaged RuvB subunits stimulates ATP hydrolysis and nucleotide exchange. Immobilization of the converter enables RuvB to convert the ATP-contained energy into a lever motion, pulling 2 nucleotides of DNA out of the RuvA tetramer per ATP hydrolyzed, thus driving DNA branch migration. The RuvB motors rotate together with the DNA substrate, which together with the progressing nucleotide cycle form the mechanistic basis for DNA recombination by continuous HJ branch migration. Branch migration allows RuvC to scan DNA until it finds its consensus sequence, where it cleaves and resolves cruciform DNA. The protein is Holliday junction branch migration complex subunit RuvB of Rickettsia felis (strain ATCC VR-1525 / URRWXCal2) (Rickettsia azadi).